Consider the following 73-residue polypeptide: Large ribosomal subunit protein bL31 (73 aa).

Belongs to the bacterial ribosomal protein bL31 family. Type A subfamily. As to quaternary structure, part of the 50S ribosomal subunit.

Its function is as follows. Binds the 23S rRNA. This is Large ribosomal subunit protein bL31 (rpmE) from Jannaschia sp. (strain CCS1).